Here is a 1205-residue protein sequence, read N- to C-terminus: Nitric oxide synthase 3 (1205 aa).

Residues 1 to 73 form a disordered region; the sequence is MGNLKSVGQE…PPEGPKFPRV (73 aa). Residue Gly2 is the site of N-myristoyl glycine attachment. S-palmitoyl cysteine attachment occurs at residues Cys15 and Cys26. Gly residues predominate over residues 15-27; sequence CGLGLGLGLGLCG. Positions 33 to 47 are enriched in pro residues; that stretch reads TPAPEPSRAPAPATP. Cys96 and Cys101 together coordinate Zn(2+). The interval 100-488 is interaction with NOSIP; that stretch reads RCLGSLVLPR…PDPWKGSAAK (389 aa). Ser104 serves as a coordination point for (6R)-L-erythro-5,6,7,8-tetrahydrobiopterin. A Phosphoserine; by CDK5 modification is found at Ser116. Cys186 contacts heme b. Residues Gln249, Trp358, Tyr359, Glu363, and Asn368 each contribute to the L-arginine site. The (6R)-L-erythro-5,6,7,8-tetrahydrobiopterin site is built by Ala448, Trp449, and Phe462. Tyr477 contacts heme b. A calmodulin-binding region spans residues 492–512; it reads IARKKTFKEVANAVKISASLM. A Phosphothreonine; by AMPK modification is found at Thr497. One can recognise a Flavodoxin-like domain in the interval 522-705; sequence ASILYASETV…AFRGWAQAAF (184 aa). Ser528, Glu529, Thr530, Arg532, Ser574, and Thr575 together coordinate FMN. Phosphoserine occurs at positions 617, 635, and 640. Residues Ser656, Cys663, Glu689, and Gln693 each coordinate FMN. The 247-residue stretch at 758–1004 folds into the FAD-binding FR-type domain; the sequence is RKMFQATVLS…IRAAPSFRLP (247 aa). Arg778 lines the NADP(+) pocket. FAD is bound at residue His800. Positions 820–848 are disordered; sequence EDPTPPTESVGVEQLEKGSPGGPPPSWVR. The residue at position 838 (Ser838) is a Phosphoserine. Positions 940, 942, 943, 958, 960, 964, 977, 978, and 979 each coordinate FAD. The NADP(+) site is built by Thr1018, Arg1051, Ser1080, Arg1081, Lys1087, Tyr1089, and Gln1091. At Thr1177 the chain carries Phosphothreonine. A Phosphoserine; by AMPK modification is found at Ser1179. Ser1181 carries the phosphoserine modification.

It belongs to the NOS family. In terms of assembly, homodimer. Interacts with NOSIP and NOSTRIN. Interacts with HSP90AB1. Forms a complex with ASL, ASS1 and SLC7A1; the complex regulates cell-autonomous L-arginine synthesis and citrulline recycling while channeling extracellular L-arginine to nitric oxide synthesis pathway. Heme b is required as a cofactor. The cofactor is FAD. FMN serves as cofactor. Requires (6R)-L-erythro-5,6,7,8-tetrahydrobiopterin as cofactor. Phosphorylation by AMPK at Ser-1179 in the presence of Ca(2+)-calmodulin (CaM) activates activity. In absence of Ca(2+)-calmodulin, AMPK also phosphorylates Thr-497, resulting in inhibition of activity. Phosphorylation of Ser-116 by CDK5 reduces activity.

It is found in the membrane. Its subcellular location is the caveola. It localises to the cytoplasm. The protein localises to the cytoskeleton. The protein resides in the golgi apparatus. It is found in the cell membrane. It catalyses the reaction 2 L-arginine + 3 NADPH + 4 O2 + H(+) = 2 L-citrulline + 2 nitric oxide + 3 NADP(+) + 4 H2O. Stimulated by calcium/calmodulin. Inhibited by NOSIP and NOSTRIN. Its function is as follows. Produces nitric oxide (NO) which is implicated in vascular smooth muscle relaxation through a cGMP-mediated signal transduction pathway. NO mediates vascular endothelial growth factor (VEGF)-induced angiogenesis in coronary vessels and promotes blood clotting through the activation of platelets. The sequence is that of Nitric oxide synthase 3 (NOS3) from Sus scrofa (Pig).